A 313-amino-acid polypeptide reads, in one-letter code: Ribosomal protein L11 methyltransferase (313 aa).

4 residues coordinate S-adenosyl-L-methionine: T163, G184, D206, and N249.

The protein belongs to the methyltransferase superfamily. PrmA family.

It is found in the cytoplasm. The enzyme catalyses L-lysyl-[protein] + 3 S-adenosyl-L-methionine = N(6),N(6),N(6)-trimethyl-L-lysyl-[protein] + 3 S-adenosyl-L-homocysteine + 3 H(+). Functionally, methylates ribosomal protein L11. This Brevibacillus brevis (strain 47 / JCM 6285 / NBRC 100599) protein is Ribosomal protein L11 methyltransferase.